A 355-amino-acid polypeptide reads, in one-letter code: Heterogeneous nuclear ribonucleoprotein D0 (355 aa).

The disordered stretch occupies residues 1-91 (MSEEQFGGDG…SSPRHTEAAA (91 aa)). An N-acetylserine modification is found at S2. Residues 11 to 43 (AAAAATAAVGGSAGEQEGAMVAAAAQGPAAAAG) show a composition bias toward low complexity. Gly residues predominate over residues 44-58 (SGSGGGGSAAGGTEG). Residues 64–73 (EGAKIDASKN) are compositionally biased toward basic and acidic residues. S71 carries the phosphoserine modification. K72 participates in a covalent cross-link: Glycyl lysine isopeptide (Lys-Gly) (interchain with G-Cter in SUMO2). A phosphoserine mark is found at S80, S82, and S83. RRM domains follow at residues 97-179 (WKMF…KTKE) and 182-261 (KKIF…MSKE). K119 is subject to N6-methyllysine. Residue T127 is modified to Phosphothreonine. K129 is covalently cross-linked (Glycyl lysine isopeptide (Lys-Gly) (interchain with G-Cter in SUMO2)). K165 is modified (N6-acetyllysine). Phosphoserine is present on S190. At T193 the chain carries Phosphothreonine. K197 participates in a covalent cross-link: Glycyl lysine isopeptide (Lys-Gly) (interchain with G-Cter in SUMO2). Residues K243 and K251 each carry the N6-acetyllysine modification. E261 and Y263 each carry omega-N-methylarginine. At S271 the chain carries Phosphoserine. Omega-N-methylarginine is present on residues R272, R278, R280, and R282. R345 carries the post-translational modification Asymmetric dimethylarginine; alternate. R345 bears the Dimethylated arginine; alternate mark. At R345 the chain carries Omega-N-methylarginine; alternate.

As to quaternary structure, identified in a IGF2BP1-dependent mRNP granule complex containing untranslated mRNAs. Part of a complex associated with the FOS mCRD domain and consisting of PABPC1, PAIP1, CSDE1/UNR and SYNCRIP. Interacts with IGF2BP2. Interacts with GTPBP1. Interacts with EIF4G1; the interaction requires RNA. Interacts with EIF3B and RPS3. Post-translationally, methylated by PRMT1, in an insulin-dependent manner. The PRMT1-mediated methylation regulates its phosphorylation. In terms of processing, arg-345 is dimethylated, probably to asymmetric dimethylarginine.

Its subcellular location is the nucleus. It is found in the cytoplasm. In terms of biological role, binds with high affinity to RNA molecules that contain AU-rich elements (AREs) found within the 3'-UTR of many proto-oncogenes and cytokine mRNAs. Also binds to double- and single-stranded DNA sequences in a specific manner and functions a transcription factor. Each of the RNA-binding domains specifically can bind solely to a single-stranded non-monotonous 5'-UUAG-3' sequence and also weaker to the single-stranded 5'-TTAGGG-3' telomeric DNA repeat. Binds RNA oligonucleotides with 5'-UUAGGG-3' repeats more tightly than the telomeric single-stranded DNA 5'-TTAGGG-3' repeats. Binding of RRM1 to DNA inhibits the formation of DNA quadruplex structure which may play a role in telomere elongation. May be involved in translationally coupled mRNA turnover. Implicated with other RNA-binding proteins in the cytoplasmic deadenylation/translational and decay interplay of the FOS mRNA mediated by the major coding-region determinant of instability (mCRD) domain. May play a role in the regulation of the rhythmic expression of circadian clock core genes. Directly binds to the 3'UTR of CRY1 mRNA and induces CRY1 rhythmic translation. May also be involved in the regulation of PER2 translation. In Mus musculus (Mouse), this protein is Heterogeneous nuclear ribonucleoprotein D0 (Hnrnpd).